Reading from the N-terminus, the 420-residue chain is Torsin-4A-A (420 aa).

The helical transmembrane segment at 130–150 threads the bilayer; sequence CLLLFIGIVCFQILNAIENLD. Position 202-209 (202-209) interacts with ATP; sequence GPSGVGKS.

Belongs to the ClpA/ClpB family. Torsin subfamily.

It is found in the membrane. The chain is Torsin-4A-A (tor4a-a) from Xenopus laevis (African clawed frog).